Reading from the N-terminus, the 449-residue chain is Delta(8)-fatty-acid desaturase 1 (449 aa).

Residues 7 to 91 enclose the Cytochrome b5 heme-binding domain; it reads KKYITNEDLK…IRDFQVSEVS (85 aa). 2 residues coordinate heme: His-42 and His-65. 2 helical membrane passes run 113 to 133 and 138 to 158; these read VTLY…YGVL and VFAH…SAYI. The Histidine box-1 signature appears at 160–164; that stretch reads HDSGH. Residues 173–195 form a helical membrane-spanning segment; the sequence is YNRFAQLLSGNCLTGISIAWWKW. Positions 197 to 201 match the Histidine box-2 motif; the sequence is HNAHH. Transmembrane regions (helical) follow at residues 255-275, 284-304, and 311-331; these read YYPV…LLLF, ALNF…VSCL, and FFFV…FTLN. Positions 374–378 match the Histidine box-3 motif; the sequence is QLEHH.

This sequence belongs to the fatty acid desaturase type 1 family. It depends on Fe cation as a cofactor. In terms of tissue distribution, highly expressed in flowers. Expressed in roots, leaves, stems and siliques.

Its subcellular location is the endoplasmic reticulum membrane. It catalyses the reaction an N-acyl-(4R)-4-hydroxysphinganine + 2 Fe(II)-[cytochrome b5] + O2 + 2 H(+) = a (4R,8E)-4-hydroxysphingenine ceramide + 2 Fe(III)-[cytochrome b5] + 2 H2O. The catalysed reaction is an N-acyl-(4R)-4-hydroxysphinganine + 2 Fe(II)-[cytochrome b5] + O2 + 2 H(+) = a (4R,8Z)-4-hydroxysphing-8-enine ceramide + 2 Fe(III)-[cytochrome b5] + 2 H2O. Functionally, plays a major role as delta(8)-fatty-acid desaturase which introduces a double bond at the 8-position in the long-chain base (LCB) of ceramides with or without a hydroxy group at the 4-position. The enzyme produces both the 8E and 8Z isomers (in a 4:1 ratio). This structural modification contributes to the quantitative partitioning of ceramides between the two major sphingolipid classes, glucosylceramides and glycosylinositolphosphoryl ceramides. Sphingolipids are important membrane components involved in environmental stress responses, such as resistance to chilling, and act as cell signaling molecules. The protein is Delta(8)-fatty-acid desaturase 1 (SLD1) of Arabidopsis thaliana (Mouse-ear cress).